A 368-amino-acid polypeptide reads, in one-letter code: Peptide chain release factor 2 (368 aa).

Glutamine 251 is subject to N5-methylglutamine.

Belongs to the prokaryotic/mitochondrial release factor family. Post-translationally, methylated by PrmC. Methylation increases the termination efficiency of RF2.

The protein localises to the cytoplasm. In terms of biological role, peptide chain release factor 2 directs the termination of translation in response to the peptide chain termination codons UGA and UAA. The chain is Peptide chain release factor 2 from Nitratiruptor sp. (strain SB155-2).